Reading from the N-terminus, the 254-residue chain is Ubiquinone/menaquinone biosynthesis C-methyltransferase UbiE (254 aa).

S-adenosyl-L-methionine contacts are provided by residues Thr-77, Asp-98, 126–127 (DA), and Ser-143.

Belongs to the class I-like SAM-binding methyltransferase superfamily. MenG/UbiE family.

It catalyses the reaction a 2-demethylmenaquinol + S-adenosyl-L-methionine = a menaquinol + S-adenosyl-L-homocysteine + H(+). The enzyme catalyses a 2-methoxy-6-(all-trans-polyprenyl)benzene-1,4-diol + S-adenosyl-L-methionine = a 5-methoxy-2-methyl-3-(all-trans-polyprenyl)benzene-1,4-diol + S-adenosyl-L-homocysteine + H(+). It functions in the pathway quinol/quinone metabolism; menaquinone biosynthesis; menaquinol from 1,4-dihydroxy-2-naphthoate: step 2/2. The protein operates within cofactor biosynthesis; ubiquinone biosynthesis. Methyltransferase required for the conversion of demethylmenaquinol (DMKH2) to menaquinol (MKH2) and the conversion of 2-polyprenyl-6-methoxy-1,4-benzoquinol (DDMQH2) to 2-polyprenyl-3-methyl-6-methoxy-1,4-benzoquinol (DMQH2). This is Ubiquinone/menaquinone biosynthesis C-methyltransferase UbiE from Blochmanniella pennsylvanica (strain BPEN).